A 907-amino-acid polypeptide reads, in one-letter code: Glutamate receptor 1 (907 aa).

A signal peptide spans 1-18 (MPYIFAFFCTGFLGAVVG). The Extracellular segment spans residues 19–536 (ANFPNNIQIG…GVFSFLDPLA (518 aa)). Residues Asn63, Asn249, Asn257, Asn363, Asn401, and Asn406 are each glycosylated (N-linked (GlcNAc...) asparagine). An intrachain disulfide couples Cys75 to Cys323. Residues Pro492, Thr494, and Arg499 each contribute to the L-glutamate site. A helical membrane pass occupies residues 537 to 557 (YEIWMCIVFAYIGVSVVLFLV). Topologically, residues 558-584 (SRFSPYEWHSEEFEEGRDQTTSDQSNE) are cytoplasmic. The segment at residues 585-600 (FGIFNSLWFSLGAFMQ) is an intramembrane region (helical; Pore-forming). Residues 601 to 603 (QGC) lie within the membrane without spanning it. Cys603 carries S-palmitoyl cysteine lipidation. The Cytoplasmic portion of the chain corresponds to 604–609 (DISPRS). A helical membrane pass occupies residues 610–630 (LSGRIVGGVWWFFTLIIISSY). Residues 631 to 805 (TANLAAFLTV…DKTSALSLSN (175 aa)) lie on the Extracellular side of the membrane. Ser645 is modified (phosphoserine). 2 residues coordinate L-glutamate: Ser668 and Thr669. Ser710 is modified (phosphoserine; by PKC). Position 719 (Glu719) interacts with L-glutamate. The cysteines at positions 732 and 787 are disulfide-linked. The chain crosses the membrane as a helical span at residues 806-826 (VAGVFYILIGGLGLAMLVALI). Topologically, residues 827-907 (EFCYKSRSES…SGMPLGATGL (81 aa)) are cytoplasmic. The S-palmitoyl cysteine moiety is linked to residue Cys829. The residue at position 849 (Ser849) is a Phosphoserine; by PKC, PKA and CAMK2. Positions 857 to 881 (STLPRNSGAGASGGGGSGENGRVVS) are disordered. Position 863 is a phosphoserine; by PKC, PKA and PKG/PRKG2 (Ser863). Residues 866–875 (GASGGGGSGE) are compositionally biased toward gly residues. The PDZ-binding signature appears at 904-907 (ATGL).

The protein belongs to the glutamate-gated ion channel (TC 1.A.10.1) family. GRIA1 subfamily. Homotetramer or heterotetramer of pore-forming glutamate receptor subunits; heteromeric assembly can be the result of both receptor subtype and flip-flop forms and according the composition, one partner can be dominant with respect to the fast desensitizing current component, whereas the other can determine the steady-state component. Tetramers may be formed by the dimerization of dimers. Found in a complex with GRIA2, GRIA3, GRIA4, CNIH2, CNIH3, CACNG2, CACNG3, CACNG4, CACNG5, CACNG7 and CACNG8. Interacts with HIP1 and RASGRF2. Interacts with SYNDIG1 and GRIA2. Interacts with DLG1 (via C-terminus). Interacts with LRFN1. Interacts with PRKG2. Interacts with CNIH2 and CACNG2. Interacts with CACNG5; this interaction modulates the gating. Interacts (via C-terminus) with PDLIM4 (via LIM domain); this interaction as well as the interaction of PDLIM4 with alpha-actinin is required for their colocalization in early endosomes. Interacts with SNX27 (via PDZ domain); the interaction is required for recycling to the plasma membrane when endocytosed and prevent degradation in lysosomes. Interacts (via PDZ-binding motif) with SHANK3 (via PDZ domain). Interacts with CACNG3; associates GRIA1 with the adapter protein complex 4 (AP-4) to target GRIA1 to the somatodendritic compartment of neurons. Interacts with CACNG2; this interaction mediates traffick to the plasma membrane and modulation of desensitization. Interaction with CNIH2 and CNIH3; this interaction promotes expression at the plasma membrane and extensively modulates their gating properties by slowing deactivation and desensitization kinetics. Found in a complex with GRIA2, GRIA3, GRIA4, DLG4, CACNG8 and CNIH2. Post-translationally, phosphorylated at Ser-645. Phosphorylated at Ser-710 by PKC. Phosphorylated at Ser-849 by PKC, PKA and CAMK2. Phosphorylated at Ser-863 by PKC, PKA and PRKG2. Phosphorylation of Ser-863 is reduced by induction of long-term depression and increased by induction of long-term potentiation. Palmitoylated. Depalmitoylated by CPT1C and upon L-glutamate stimulation. ZDHHC3/GODZ specifically palmitoylates Cys-603, which leads to Golgi retention and decreased cell surface expression. In contrast, Cys-829 palmitoylation does not affect cell surface expression but regulates stimulation-dependent endocytosis. Detected in cerebellum (at protein level).

It is found in the cell membrane. The protein resides in the endoplasmic reticulum membrane. The protein localises to the postsynaptic cell membrane. It localises to the postsynaptic density membrane. Its subcellular location is the cell projection. It is found in the dendrite. The protein resides in the dendritic spine. The protein localises to the early endosome membrane. It localises to the recycling endosome membrane. Its subcellular location is the presynapse. It is found in the synapse. The enzyme catalyses Ca(2+)(in) = Ca(2+)(out). The catalysed reaction is Na(+)(in) = Na(+)(out). It catalyses the reaction Mg(2+)(in) = Mg(2+)(out). It carries out the reaction Li(+)(in) = Li(+)(out). The enzyme catalyses K(+)(in) = K(+)(out). The catalysed reaction is Sr(2+)(in) = Sr(2+)(out). Its activity is regulated as follows. Glutamate-gated receptor activity inhibited by DNQX (6,7-dinitroquinoxaline-2,3-dione). Ionotropic glutamate receptor that functions as a ligand-gated cation channel, gated by L-glutamate and glutamatergic agonists such as alpha-amino-3-hydroxy-5-methyl-4-isoxazolepropionic acid (AMPA), quisqualic acid, and kainic acid. L-glutamate acts as an excitatory neurotransmitter at many synapses in the central nervous system. Binding of the excitatory neurotransmitter L-glutamate induces a conformation change, leading to the opening of the cation channel, and thereby converts the chemical signal to an electrical impulse upon entry of monovalent and divalent cations such as sodium and calcium. The receptor then desensitizes rapidly and enters in a transient inactive state, characterized by the presence of bound agonist. In the presence of CACNG2 or CACNG4 or CACNG7 or CACNG8, shows resensitization which is characterized by a delayed accumulation of current flux upon continued application of L-glutamate. Resensitization is blocked by CNIH2 through interaction with CACNG8 in the CACNG8-containing AMPA receptors complex. Calcium (Ca(2+)) permeability depends on subunits composition and, heteromeric channels containing edited GRIA2 subunit are calcium-impermeable. Also permeable to other divalents cations such as strontium(2+) and magnesium(2+) and monovalent cations such as potassium(1+) and lithium(1+). This Rattus norvegicus (Rat) protein is Glutamate receptor 1.